We begin with the raw amino-acid sequence, 322 residues long: Deoxyhypusine hydroxylase (322 aa).

4 HEAT-like PBS-type repeats span residues 76–102 (LKHE…VMLD), 109–135 (VRHE…SRRE), 234–260 (FKHE…VLKR), and 267–293 (VRHE…HLQD). Fe cation-binding residues include histidine 78, glutamate 79, histidine 111, glutamate 112, histidine 236, glutamate 237, histidine 269, and glutamate 270.

The protein belongs to the deoxyhypusine hydroxylase family. The cofactor is Fe(2+).

It is found in the cytoplasm. It localises to the nucleus. The enzyme catalyses [eIF5A protein]-deoxyhypusine + AH2 + O2 = [eIF5A protein]-hypusine + A + H2O. It functions in the pathway protein modification; eIF5A hypusination. Catalyzes the hydroxylation of the N(6)-(4-aminobutyl)-L-lysine intermediate to form hypusine, an essential post-translational modification only found in mature eIF-5A factor. This chain is Deoxyhypusine hydroxylase, found in Eremothecium gossypii (strain ATCC 10895 / CBS 109.51 / FGSC 9923 / NRRL Y-1056) (Yeast).